Reading from the N-terminus, the 332-residue chain is Ketol-acid reductoisomerase (NADP(+)) (332 aa).

Positions 5 to 185 constitute a KARI N-terminal Rossmann domain; sequence VKVYYDDEVS…GCTRAGVIET (181 aa). Residues 28 to 31, arginine 51, serine 56, and 86 to 89 each bind NADP(+); these read YGNQ and DLVQ. Histidine 111 is a catalytic residue. Glycine 137 is an NADP(+) binding site. Positions 186–331 constitute a KARI C-terminal knotted domain; sequence TFKDETESDL…RFIRKMSGLE (146 aa). Mg(2+) is bound by residues aspartate 194, glutamate 198, glutamate 230, and glutamate 234. Serine 255 lines the substrate pocket.

It belongs to the ketol-acid reductoisomerase family. The cofactor is Mg(2+).

It carries out the reaction (2R)-2,3-dihydroxy-3-methylbutanoate + NADP(+) = (2S)-2-acetolactate + NADPH + H(+). The catalysed reaction is (2R,3R)-2,3-dihydroxy-3-methylpentanoate + NADP(+) = (S)-2-ethyl-2-hydroxy-3-oxobutanoate + NADPH + H(+). The protein operates within amino-acid biosynthesis; L-isoleucine biosynthesis; L-isoleucine from 2-oxobutanoate: step 2/4. It participates in amino-acid biosynthesis; L-valine biosynthesis; L-valine from pyruvate: step 2/4. In terms of biological role, involved in the biosynthesis of branched-chain amino acids (BCAA). Catalyzes an alkyl-migration followed by a ketol-acid reduction of (S)-2-acetolactate (S2AL) to yield (R)-2,3-dihydroxy-isovalerate. In the isomerase reaction, S2AL is rearranged via a Mg-dependent methyl migration to produce 3-hydroxy-3-methyl-2-ketobutyrate (HMKB). In the reductase reaction, this 2-ketoacid undergoes a metal-dependent reduction by NADPH to yield (R)-2,3-dihydroxy-isovalerate. This Pyrococcus abyssi (strain GE5 / Orsay) protein is Ketol-acid reductoisomerase (NADP(+)).